The primary structure comprises 120 residues: Large ribosomal subunit protein bL12 (120 aa).

This sequence belongs to the bacterial ribosomal protein bL12 family. As to quaternary structure, homodimer. Part of the ribosomal stalk of the 50S ribosomal subunit. Forms a multimeric L10(L12)X complex, where L10 forms an elongated spine to which 2 to 4 L12 dimers bind in a sequential fashion. Binds GTP-bound translation factors.

Its function is as follows. Forms part of the ribosomal stalk which helps the ribosome interact with GTP-bound translation factors. Is thus essential for accurate translation. The polypeptide is Large ribosomal subunit protein bL12 (Shouchella clausii (strain KSM-K16) (Alkalihalobacillus clausii)).